A 169-amino-acid chain; its full sequence is MPRSQRNDNFIDKTFTVVADILLRVIPTTRREKEAFSYYRDGMSAQSEGEYAEALQNYYEAMRLEIDPYDRSYILYNIGLIHTSNGQHTKALEYYLQALERNPALPQAFNNMAVICHYRGEQAIQQGDPENAEAWFDQAADYWKQGIALAPSNYIEAQNWLKITGRLKA.

TPR repeat units lie at residues 35–68, 72–105, and 120–153; these read AFSY…EIDP, SYIL…NPAL, and GEQA…APSN.

The protein belongs to the Ycf3 family.

The protein resides in the plastid. It localises to the chloroplast thylakoid membrane. In terms of biological role, essential for the assembly of the photosystem I (PSI) complex. May act as a chaperone-like factor to guide the assembly of the PSI subunits. This Chaetosphaeridium globosum (Charophycean green alga) protein is Photosystem I assembly protein Ycf3.